Consider the following 381-residue polypeptide: UDP-N-acetylglucosamine--N-acetylmuramyl-(pentapeptide) pyrophosphoryl-undecaprenol N-acetylglucosamine transferase (381 aa).

Residues 10–12 (TGG), Asn124, Arg165, Ser207, Ile263, and Gln308 contribute to the UDP-N-acetyl-alpha-D-glucosamine site.

This sequence belongs to the glycosyltransferase 28 family. MurG subfamily.

It is found in the cell inner membrane. The catalysed reaction is di-trans,octa-cis-undecaprenyl diphospho-N-acetyl-alpha-D-muramoyl-L-alanyl-D-glutamyl-meso-2,6-diaminopimeloyl-D-alanyl-D-alanine + UDP-N-acetyl-alpha-D-glucosamine = di-trans,octa-cis-undecaprenyl diphospho-[N-acetyl-alpha-D-glucosaminyl-(1-&gt;4)]-N-acetyl-alpha-D-muramoyl-L-alanyl-D-glutamyl-meso-2,6-diaminopimeloyl-D-alanyl-D-alanine + UDP + H(+). It participates in cell wall biogenesis; peptidoglycan biosynthesis. Functionally, cell wall formation. Catalyzes the transfer of a GlcNAc subunit on undecaprenyl-pyrophosphoryl-MurNAc-pentapeptide (lipid intermediate I) to form undecaprenyl-pyrophosphoryl-MurNAc-(pentapeptide)GlcNAc (lipid intermediate II). This Trichlorobacter lovleyi (strain ATCC BAA-1151 / DSM 17278 / SZ) (Geobacter lovleyi) protein is UDP-N-acetylglucosamine--N-acetylmuramyl-(pentapeptide) pyrophosphoryl-undecaprenol N-acetylglucosamine transferase.